An 88-amino-acid polypeptide reads, in one-letter code: Small ribosomal subunit protein bS20 (88 aa).

A disordered region spans residues 1–27 (MANSKSAKKRALQSEKRRQHNASRRSM).

This sequence belongs to the bacterial ribosomal protein bS20 family.

In terms of biological role, binds directly to 16S ribosomal RNA. The polypeptide is Small ribosomal subunit protein bS20 (Shewanella sediminis (strain HAW-EB3)).